The sequence spans 261 residues: Short-chain-enoyl-CoA hydratase (261 aa).

The active-site Nucleophile is the E114. E134 functions as the Proton acceptor in the catalytic mechanism.

This sequence belongs to the enoyl-CoA hydratase/isomerase family. In terms of assembly, homotetramer.

The catalysed reaction is a short-chain (3S)-3-hydroxyacyl-CoA = a short-chain (2E)-enoyl-CoA + H2O. It functions in the pathway lipid metabolism; butanoate metabolism. Catalyzes the reversible hydration of crotonyl-CoA. Can also use hexenoyl-CoA but not higher analogs. This Clostridium acetobutylicum (strain ATCC 824 / DSM 792 / JCM 1419 / IAM 19013 / LMG 5710 / NBRC 13948 / NRRL B-527 / VKM B-1787 / 2291 / W) protein is Short-chain-enoyl-CoA hydratase (crt).